A 586-amino-acid chain; its full sequence is Kinesin-like protein KIF25 (586 aa).

A coiled-coil region spans residues 10–94; it reads SFWEQRTRQL…VIQKLNQDIQ (85 aa). The Kinesin motor domain occupies 173–565; sequence NIRVHCRIRP…LGFGIRARQV (393 aa). 267-274 serves as a coordination point for ATP; that stretch reads GQTGSGKS. Disordered regions lie at residues 417 to 460 and 564 to 586; these read TADQ…AGRA and QVQRGPARKRPPSSQMEGKRRPD.

Belongs to the TRAFAC class myosin-kinesin ATPase superfamily. Kinesin family. As to quaternary structure, homotetramer.

The protein localises to the cytoplasm. It localises to the cytoskeleton. The protein resides in the microtubule organizing center. Its subcellular location is the centrosome. In terms of biological role, minus-end microtubule-dependent motor protein. Acts as a negative regulator of centrosome separation required to prevent premature centrosome separation during interphase. Required to maintain a centered nucleus to ensure that the spindle is stably oriented at the onset of mitosis. May also act as a negative regulator of amino acid starvation-induced autophagy. The sequence is that of Kinesin-like protein KIF25 from Macaca fascicularis (Crab-eating macaque).